We begin with the raw amino-acid sequence, 454 residues long: Tryptophanase (454 aa).

Lysine 256 carries the post-translational modification N6-(pyridoxal phosphate)lysine.

This sequence belongs to the beta-eliminating lyase family. As to quaternary structure, homotetramer. It depends on pyridoxal 5'-phosphate as a cofactor.

The enzyme catalyses L-tryptophan + H2O = indole + pyruvate + NH4(+). The protein operates within amino-acid degradation; L-tryptophan degradation via pyruvate pathway; indole and pyruvate from L-tryptophan: step 1/1. This Hyphomonas neptunium (strain ATCC 15444) protein is Tryptophanase.